The following is a 238-amino-acid chain: ATP synthase subunit a (238 aa).

Helical transmembrane passes span 18–38 (LTLL…VFWA), 76–96 (YSLL…LGLF), 114–134 (NLAF…IEGV), 166–186 (SLAI…GLIV), and 193–213 (VYWW…SVFI).

Belongs to the ATPase A chain family. In terms of assembly, F-type ATPases have 2 components, CF(1) - the catalytic core - and CF(0) - the membrane proton channel. CF(1) has five subunits: alpha(3), beta(3), gamma(1), delta(1), epsilon(1). CF(0) has three main subunits: a(1), b(2) and c(9-12). The alpha and beta chains form an alternating ring which encloses part of the gamma chain. CF(1) is attached to CF(0) by a central stalk formed by the gamma and epsilon chains, while a peripheral stalk is formed by the delta and b chains.

It localises to the cell membrane. In terms of biological role, key component of the proton channel; it plays a direct role in the translocation of protons across the membrane. The sequence is that of ATP synthase subunit a from Streptococcus pyogenes serotype M5 (strain Manfredo).